Consider the following 391-residue polypeptide: Casein kinase II subunit alpha (391 aa).

Positions 36–41 (QDDYQL) are interaction with beta subunit. The 286-residue stretch at 39 to 324 (YQLVRKLGRG…AREAMEHPYF (286 aa)) folds into the Protein kinase domain. ATP-binding positions include 45-53 (LGRGKYSEV) and lysine 68. Aspartate 156 acts as the Proton acceptor in catalysis. Positions 335–346 (GSSNMPGGSTPV) are enriched in polar residues. Residues 335–363 (GSSNMPGGSTPVSSASMMSGISSVPTPSP) form a disordered region. Over residues 347-357 (SSASMMSGISS) the composition is skewed to low complexity.

Belongs to the protein kinase superfamily. Ser/Thr protein kinase family. CK2 subfamily. Tetramer composed of an alpha chain, an alpha' and two beta chains. Interacts with RNPS1.

Its subcellular location is the nucleus. It carries out the reaction L-seryl-[protein] + ATP = O-phospho-L-seryl-[protein] + ADP + H(+). It catalyses the reaction L-threonyl-[protein] + ATP = O-phospho-L-threonyl-[protein] + ADP + H(+). In terms of biological role, catalytic subunit of a constitutively active serine/threonine-protein kinase complex that phosphorylates a large number of substrates containing acidic residues C-terminal to the phosphorylated serine or threonine. Regulates numerous cellular processes, such as cell cycle progression, apoptosis and transcription, as well as viral infection. May act as a regulatory node which integrates and coordinates numerous signals leading to an appropriate cellular response. During mitosis, functions as a component of the p53/TP53-dependent spindle assembly checkpoint (SAC) that maintains cyclin-B-CDK1 activity and G2 arrest in response to spindle damage. Can also negatively regulate apoptosis. Phosphorylates the caspases CASP9 and CASP2 and the apoptotic regulator NOL3. Phosphorylation protects CASP9 from cleavage and activation by CASP8, and inhibits the dimerization of CASP2 and activation of CASP8. Plays an important role in the circadian clock function by phosphorylating BMAL1. This is Casein kinase II subunit alpha (CSNK2A1) from Gallus gallus (Chicken).